The chain runs to 316 residues: MKYQVLLYYKYTTIEDPEAFAKEHLAFCKSLNLKGRILVATEGINGTLSGTVEETEKYMEAMQADERFKDTFFKIDPAEEMAFRKMFVRPRSELVALNLEEDVDPLETTGKYLEPAEFKEALLDEDTVVIDARNDYEYDLGHFRGAVRPDIRSFRELPQWIRENKEKFMDKKIVTYCTGGIRCEKFSGWLLKEGFEDVAQLHGGIANYGKNPETRGELWDGKMYVFDDRISVEINHVDKKVIGKDWFDGTPCERYINCANPECNRQILTSEENEHKHLGGCSLECSQHPANRYVKKHNLTEAEVAERLALLEAVEV.

One can recognise a Rhodanese domain in the interval 123–217 (LDEDTVVIDA…YGKNPETRGE (95 aa)). The active-site Cysteine persulfide intermediate is Cys177.

The protein belongs to the TrhO family.

The enzyme catalyses uridine(34) in tRNA + AH2 + O2 = 5-hydroxyuridine(34) in tRNA + A + H2O. In terms of biological role, catalyzes oxygen-dependent 5-hydroxyuridine (ho5U) modification at position 34 in tRNAs. The chain is tRNA uridine(34) hydroxylase from Enterococcus faecalis (strain ATCC 700802 / V583).